Consider the following 29-residue polypeptide: Brevinin-2Rc (29 aa).

C23 and C29 are disulfide-bonded.

Expressed by the skin glands.

It localises to the secreted. In terms of biological role, antimicrobial peptide. This chain is Brevinin-2Rc, found in Pelophylax ridibundus (Marsh frog).